Consider the following 429-residue polypeptide: Histidine--tRNA ligase (429 aa).

The protein belongs to the class-II aminoacyl-tRNA synthetase family. As to quaternary structure, homodimer.

The protein localises to the cytoplasm. It catalyses the reaction tRNA(His) + L-histidine + ATP = L-histidyl-tRNA(His) + AMP + diphosphate + H(+). In Desulfotalea psychrophila (strain LSv54 / DSM 12343), this protein is Histidine--tRNA ligase.